Consider the following 182-residue polypeptide: Ribosome maturation factor RimM (182 aa).

In terms of domain architecture, PRC barrel spans 101–182; the sequence is VDEYYWSDLK…RIYVNWGVDY (82 aa).

Belongs to the RimM family. Binds ribosomal protein uS19.

The protein resides in the cytoplasm. Functionally, an accessory protein needed during the final step in the assembly of 30S ribosomal subunit, possibly for assembly of the head region. Essential for efficient processing of 16S rRNA. May be needed both before and after RbfA during the maturation of 16S rRNA. It has affinity for free ribosomal 30S subunits but not for 70S ribosomes. The chain is Ribosome maturation factor RimM from Acinetobacter baylyi (strain ATCC 33305 / BD413 / ADP1).